The sequence spans 795 residues: Phenylalanine--tRNA ligase beta subunit (795 aa).

Residues 39 to 148 (AGSFHGVVVG…ADAPIGTDIR (110 aa)) form the tRNA-binding domain. One can recognise a B5 domain in the interval 401 to 476 (PKRATITLRR…RVYGYNNIPD (76 aa)). 4 residues coordinate Mg(2+): Asp454, Asp460, Glu463, and Glu464. Residues 701-794 (SRFPANRRDI…LKERFQASLR (94 aa)) enclose the FDX-ACB domain.

It belongs to the phenylalanyl-tRNA synthetase beta subunit family. Type 1 subfamily. Tetramer of two alpha and two beta subunits. The cofactor is Mg(2+).

Its subcellular location is the cytoplasm. It carries out the reaction tRNA(Phe) + L-phenylalanine + ATP = L-phenylalanyl-tRNA(Phe) + AMP + diphosphate + H(+). The protein is Phenylalanine--tRNA ligase beta subunit of Shigella dysenteriae serotype 1 (strain Sd197).